The sequence spans 626 residues: Pheromone B alpha 3 receptor (626 aa).

Helical transmembrane passes span 8-28 (LFPTFAFLGFVLALVPLPWHL), 36-56 (CFFMVWTALGCLNQFVNSIVW), 70-90 (ISIRITMGLSVGLPASSLCII), 113-133 (IIIDALICVLFPLVYIAMQYI), 163-183 (IWPVLIGMVSATYSVLALIEF), 208-228 (LMALAMTEMCCTVPLGIFVIV), and 271-291 (ELTRWLAPVSAMLFFAYFGFA). Disordered regions lie at residues 363 to 409 (KQYT…SSPI), 481 to 509 (ATFTSANNDTDEPTSPALPDTPSSCSSSA), 524 to 549 (STTDVTRDTGSLPIRRSPAGPPRLPS), and 571 to 626 (QDVA…RASV). Low complexity predominate over residues 376-391 (SSSGFSSSESTRFGSS). Positions 574–606 (ATGTAAPTTTAPAPASTTIAPATTTATAPTTTA) are enriched in low complexity.

It belongs to the G-protein coupled receptor 4 family.

The protein resides in the membrane. Its function is as follows. Receptor for the BAP3 pheromone, a prenylated mating factor. The polypeptide is Pheromone B alpha 3 receptor (BAR3) (Schizophyllum commune (strain H4-8 / FGSC 9210) (Split gill fungus)).